Here is a 273-residue protein sequence, read N- to C-terminus: Putative pyruvate, phosphate dikinase regulatory protein (273 aa).

153–160 (GISRTSKT) serves as a coordination point for ADP.

Belongs to the pyruvate, phosphate/water dikinase regulatory protein family. PDRP subfamily.

The catalysed reaction is N(tele)-phospho-L-histidyl/L-threonyl-[pyruvate, phosphate dikinase] + ADP = N(tele)-phospho-L-histidyl/O-phospho-L-threonyl-[pyruvate, phosphate dikinase] + AMP + H(+). The enzyme catalyses N(tele)-phospho-L-histidyl/O-phospho-L-threonyl-[pyruvate, phosphate dikinase] + phosphate + H(+) = N(tele)-phospho-L-histidyl/L-threonyl-[pyruvate, phosphate dikinase] + diphosphate. In terms of biological role, bifunctional serine/threonine kinase and phosphorylase involved in the regulation of the pyruvate, phosphate dikinase (PPDK) by catalyzing its phosphorylation/dephosphorylation. The sequence is that of Putative pyruvate, phosphate dikinase regulatory protein from Rhizobium etli (strain CIAT 652).